Here is a 399-residue protein sequence, read N- to C-terminus: Protein IQ-DOMAIN 25 (399 aa).

The short motif at 1-8 is the Nuclear localization signal element; it reads MRKNLTKL. 2 calmodulin-binding regions span residues 81–91 and 99–110; these read KERRTHAIAVA and DAAVAAAKAAAA. IQ domains lie at 130-158 and 159-181; these read EHRA…GVVK and IQAL…SMEA. 3 disordered regions span residues 198–219, 262–302, and 346–377; these read NGNA…ENRN, SPLS…SPAR, and LRSH…VRMQ. The span at 285-294 shows a compositional bias: polar residues; the sequence is KFPTAQSTPR.

The protein belongs to the IQD family. Binds to multiple calmodulin (CaM) in the presence of Ca(2+) and CaM-like proteins.

The protein resides in the nucleus. The protein localises to the cell membrane. May be involved in cooperative interactions with calmodulins or calmodulin-like proteins. Recruits calmodulin proteins to microtubules, thus being a potential scaffold in cellular signaling and trafficking. May associate with nucleic acids and regulate gene expression at the transcriptional or post-transcriptional level. The sequence is that of Protein IQ-DOMAIN 25 from Arabidopsis thaliana (Mouse-ear cress).